A 314-amino-acid polypeptide reads, in one-letter code: Type II methyltransferase M.HpaI (314 aa).

It belongs to the N(4)/N(6)-methyltransferase family.

The enzyme catalyses a 2'-deoxyadenosine in DNA + S-adenosyl-L-methionine = an N(6)-methyl-2'-deoxyadenosine in DNA + S-adenosyl-L-homocysteine + H(+). In terms of biological role, a beta subtype methylase that recognizes the double-stranded sequence 5'-GTTAAC-3', methylates A-5 on both strands, and protects the DNA from cleavage by the HpaI endonuclease. In Haemophilus parainfluenzae, this protein is Type II methyltransferase M.HpaI (hpaIM).